The primary structure comprises 1021 residues: Solute carrier family 12 member 3 (1021 aa).

Topologically, residues 1–137 (MAELPTTETP…KNPEEPVRFG (137 aa)) are cytoplasmic. Ser43 carries the phosphoserine modification. Thr46 carries the post-translational modification Phosphothreonine; by OXSR1 and STK39. Phosphoserine is present on Ser49. Phosphothreonine is present on Thr50. Phosphothreonine; by OXSR1 and STK39 occurs at positions 55 and 60. Ser73 carries the phosphoserine modification. At Ser91 the chain carries Phosphoserine; by OXSR1 and STK39. Thr124 is modified (phosphothreonine). Ser126 carries the post-translational modification Phosphoserine. A discontinuously helical membrane pass occupies residues 138 to 167 (WVKGVMIRCMLNIWGVILYLRLPWITAQAG). Residue Leu148 coordinates Na(+). Asn149 serves as a coordination point for polythiazide. Trp151 contacts Na(+). The helical transmembrane segment at 168 to 189 (IVLTWIIILLSVTVTSITGLSI) threads the bilayer. The Cytoplasmic portion of the chain corresponds to 190–220 (SAISTNGKVKSGGTYFLISRSLGPELGGSIG). Residues 221–243 (LIFAFANAVGVAMHTVGFAETVR) traverse the membrane as a helical segment. Residues Asn227 and His234 each coordinate polythiazide. The Extracellular portion of the chain corresponds to 244 to 255 (DLLQEYGAPIVD). The next 2 helical transmembrane spans lie at 256–280 (PIND…AGME) and 281–303 (WESK…YLVG). The Extracellular segment spans residues 304–338 (TLIPPSEDKASKGFFSYRADIFVQNLVPDWRGPDG). The chain crosses the membrane as a discontinuously helical span at residues 339-360 (TFFGMFSIFFPSATGILAGANI). Residue Thr352 coordinates polythiazide. Residues Gly353, Ile354, and Leu355 each coordinate chloride. Residue Asn359 coordinates polythiazide. The Cytoplasmic segment spans residues 361–371 (SGDLKDPAIAI). The helical transmembrane segment at 372-393 (PKGTLMAIFWTTISYLAISATI) threads the bilayer. Residues 394-453 (GSCVVRDASGVLNDTVTPGWGACEGLACSYGWNFTECTQQHSCHYGLINYYQTMSMVSGF) lie on the Extracellular side of the membrane. N-linked (GlcNAc...) asparagine glycosylation is present at Asn406. Cys416 and Cys421 form a disulfide bridge. Residue Asn426 is glycosylated (N-linked (GlcNAc...) asparagine). Cysteines 430 and 436 form a disulfide. Residues 454-477 (APLITAGIFGATLSSALACLVSAA) form a helical membrane-spanning segment. Na(+) is bound by residues Ala464, Ser467, and Ser468. Residues 478 to 507 (KVFQCLCEDQLYPLIGFFGKGYGKNKEPVR) lie on the Cytoplasmic side of the membrane. A helical transmembrane segment spans residues 508–522 (GYLLAYAIAVAFIII). Topologically, residues 523 to 527 (AELNT) are extracellular. Residues 528 to 544 (IAPIISNFFLCSYALIN) traverse the membrane as a helical segment. A chloride-binding site is contributed by Tyr540. Residues 545 to 567 (FSCFHASITNSPGWRPSFQYYNK) are Cytoplasmic-facing. The next 2 helical transmembrane spans lie at 568 to 587 (WAAL…LTWW) and 588 to 599 (AALIAIGVVLFL). The Cytoplasmic portion of the chain corresponds to 600-1021 (LLYVIYKKPE…QENVLTFYCQ (422 aa)). Residues 615–630 (SVQAGSYNLALSYSVG) are scissor helix. ATP is bound by residues Leu648, Arg655, Val677, Gly741, Leu780, and Asn781.

It belongs to the SLC12A transporter family. Homodimer; adopts a domain-swap conformation at the scissor helices connecting the transmembrane domain and C-terminal domain. Interacts with KLHL3. Interacts with IL18R1; this interaction is increased by IL18 treatment. Post-translationally, ubiquitinated; ubiquitination is essential for regulation of endocytosis. The BCR(KLHL3) complex was initially identified as a candidate ubiquitin ligase for SLC12A3. However, it was later shown that it is not the case. Phosphorylated at Thr-46, Thr-55, Thr-60 and Ser-91 by OXSR1/OSR1 and STK39/SPAK downstream of WNK4, promoting its activity. Phosphorylated in response to IL18. In terms of tissue distribution, predominantly expressed in the kidney (at protein level). Localizes to the distal convoluted tubules (at protein level). Not detected in normal aorta, but abundantly expressed in fatty streaks and advanced atherosclerotic lesions (at protein level).

The protein localises to the cell membrane. The protein resides in the apical cell membrane. It carries out the reaction chloride(out) + Na(+)(out) = chloride(in) + Na(+)(in). Its activity is regulated as follows. Phosphorylation by OXSR1/OSR1 and STK39/SPAK in kidney distal convoluted tubules downstream of WNK4 promotes its activity. Also activated by OXSR1/OSR1 and STK39/SPAK downstream of WNK3. Target of thiazide diuretics used in the treatment of high blood pressure. Thiazide drugs, such as polythiazide, specifically inhibit SLC12A3/NCC transporter activity by competing with chloride for binding and by locking SLC12A3/NCC in an outward-facing conformation. In terms of biological role, electroneutral sodium and chloride ion cotransporter, which acts as a key mediator of sodium and chloride reabsorption in kidney distal convoluted tubules. Also acts as a receptor for the pro-inflammatory cytokine IL18, thereby contributing to IL18-induced cytokine production, including IFNG, IL6, IL18 and CCL2. May act either independently of IL18R1, or in a complex with IL18R1. The polypeptide is Solute carrier family 12 member 3 (Homo sapiens (Human)).